The chain runs to 123 residues: uncharacterized protein (123 aa).

In terms of domain architecture, Rhodanese spans 17-117 (SNDNAFLVDV…NNQDKGWKQN (101 aa)).

This is an uncharacterized protein from Rickettsia conorii (strain ATCC VR-613 / Malish 7).